A 1337-amino-acid polypeptide reads, in one-letter code: Partitioning defective 3 homolog (1337 aa).

Ser25 is modified (phosphoserine). Disordered stretches follow at residues 81–109 (EQDPHHGGDGTSASSTGTQSPEIFGSELG) and 143–263 (SSDP…LENM). Thr91 bears the Phosphothreonine mark. The segment covering 91-100 (TSASSTGTQS) has biased composition (low complexity). 2 stretches are compositionally biased toward polar residues: residues 150 to 163 (GLSTSVSDNNFSSE) and 171 to 188 (TRWSTTAGFLKQNTTGSP). Ser156 and Ser174 each carry phosphoserine. A compositionally biased stretch (basic and acidic residues) spans 190-203 (TCDRKKDENYRSLP). Polar residues predominate over residues 207–224 (SSWSNQFQRDNARSSLSA). The region spanning 271–359 (MVKLVQVPND…ARVIWFHVVP (89 aa)) is the PDZ 1 domain. Ser383 is subject to Phosphoserine. Residues 397 to 441 (NAPQALPRAPRLSQPPEQLDAHPRLPHSAHASTKPPTAPALAPPN) form a disordered region. PDZ domains follow at residues 461 to 546 (NIQL…LVFR) and 590 to 677 (EVPL…GMIQ). The residue at position 489 (Tyr489) is a Phosphotyrosine. Ser692, Ser695, Ser715, Ser728, Ser809, and Ser827 each carry phosphoserine. An interaction with PRKCI and PRKCZ region spans residues 712-936 (RRISHSLYSG…AAIDKSYDKP (225 aa)). Lys834 carries the N6-acetyllysine modification. At Ser837 the chain carries Phosphoserine. Lys851 is subject to N6-acetyllysine. Residues Ser852 and Ser873 each carry the phosphoserine modification. 5 disordered regions span residues 866–888 (VDDQRAGSPNRDVGPSLGLKKSS), 932–1015 (SYDK…AKKG), 1028–1055 (KHRKDDKMEKMGRIKIQDSFTSEEDRVR), 1110–1271 (LNAR…LGGH), and 1284–1337 (LLRQ…PFYS). An N6-acetyllysine modification is found at Lys885. The tract at residues 935–1337 (KPMVDDDDEG…TPEKGRPFYS (403 aa)) is interaction with FRMD4A. Residues 939–953 (DDDDEGMETLEEDTE) show a composition bias toward acidic residues. Residue Ser962 is modified to Phosphoserine; by AURKA. 2 positions are modified to phosphoserine: Ser971 and Ser973. Basic and acidic residues-rich tracts occupy residues 981-1009 (DPEKRDKAEKKKDKAGKDKKKDREKEKDK) and 1030-1043 (RKDDKMEKMGRIKI). Ser1046 carries the phosphoserine modification. Positions 1050 to 1082 (EEDRVRMKEEQERIQAKTREFRERQARERDYAE) form a coiled coil. Polar residues predominate over residues 1138–1147 (PGDSNRSTPS). A compositionally biased stretch (basic and acidic residues) spans 1148–1175 (NHDRIQRLRQEFQQAKQDEDVEDRRRTY). Coiled-coil stretches lie at residues 1149-1172 (HDRIQRLRQEFQQAKQDEDVEDRR), 1199-1222 (VQVQRQRQEERESFQQAQRQYSSL), and 1278-1299 (MLETQELLRQEQRRKEQQLKKQ). Residues 1180–1203 (SWSSSRPASQSGRHSVSVEVQVQR) show a composition bias toward low complexity. Positions 1219–1240 (YSSLPRQSRKNASSVSQDSWEQ) are enriched in polar residues. Positions 1284–1296 (LLRQEQRRKEQQL) are enriched in basic and acidic residues. The segment covering 1318 to 1327 (SQVARLNRLQ) has biased composition (polar residues). A compositionally biased stretch (basic and acidic residues) spans 1328-1337 (TPEKGRPFYS). Residue Lys1331 is modified to N6-acetyllysine.

Belongs to the PAR3 family. In terms of assembly, component of a complex whose core is composed of ARHGAP17, AMOT, PALS1, PATJ and PARD3/PAR3. Interacts (via PDZ 1 domain) with PARD6A, PARD6B and F11R/JAM1. Interacts with AURKA, AURKB and SIRT2. Interacts with PRKCI. Interacts with PRKCZ. Part of a complex with PARD6A or PARD6B, PRKCI or PRKCZ and CDC42 or RAC1. Interacts with LIMK2 and CDH5. Component of the Par polarity complex, composed of at least phosphorylated PRKCZ, PARD3 and TIAM1. Directly interacts with TIAM1 and TIAM2. Interacts with ECT2 and FBF1. Interacts (via PDZ 3 domain) with PTEN (via C-terminus). Interacts (via coiled-coil domain) with FRMD4A. Found in a complex with PARD3, CYTH1 and FRMD4A. Interacts with SAPCD2. Interacts with PRKCA. Interacts with PRKCZ. In terms of processing, acetylated. Deacetylated by SIRT2, thereby inhibiting Schwann cell peripheral myelination. Phosphorylation at Ser-827 by PRKCZ and PRKCI occurs at the most apical tip of epithelial cell-cell contacts during the initial phase of tight junction formation and may promote dissociation of the complex with PARD6. EGF-induced Tyr-1127 phosphorylation mediates dissociation from LIMK2. Phosphorylation by AURKA at Ser-962 is required for the normal establishment of neuronal polarity. In terms of tissue distribution, isoform 1 is predominantly expressed in lung, glandular stomach, prostate, ovary and uterus. Isoform 1 is also expressed in brain, with a high expression in the cortex, hippocampus and in the striatum. Isoform 2 is predominantly expressed in intestinal epithelial cells, kidney and prostate.

Its subcellular location is the cytoplasm. The protein localises to the endomembrane system. The protein resides in the cell junction. It is found in the tight junction. It localises to the adherens junction. Its subcellular location is the cell cortex. The protein localises to the cytoskeleton. The protein resides in the cell membrane. Functionally, adapter protein involved in asymmetrical cell division and cell polarization processes. Seems to play a central role in the formation of epithelial tight junctions. Association with PARD6B may prevent the interaction of PARD3 with F11R/JAM1, thereby preventing tight junction assembly. The PARD6-PARD3 complex links GTP-bound Rho small GTPases to atypical protein kinase C proteins. Required for establishment of neuronal polarity and normal axon formation in cultured hippocampal neurons. Involved in Schwann cell peripheral myelination. Targets the phosphatase PTEN to cell junctions. This chain is Partitioning defective 3 homolog (Pard3), found in Rattus norvegicus (Rat).